We begin with the raw amino-acid sequence, 656 residues long: MSELSDEASEPELLNRSLSMWHGLGTQVSGEELDVPLDLHTAASIGQYEVVKECVQRRELDLNKKNGGGWTPLMYASYIGHDTIVHLLLEAGVSVNVPTPEGQTPLMLASSCGNESIAYFLLQQGAELEMKDIQGWTALFHCTSAGHQHMVRFLLDSGANANVREPICGFTPLMEAAAAGHEIIVQYFLNHGVKVDARDHSGATARMLAKQYGHMKIVALMDTYSPSLPKSLYRSPEKYEDLSSSDESCPAPQRQRPCRKKGVSIHEGPRALARITGIGLGGRAPRPRYEQAPPRGYVTFNSSGENPLEEEGLCCRDVTSPINERDVESSSSSSSREEHAFCANLGPVQSSSSSEGLARAQGLSSEASVESNEDSDHACKSSARKQAKSYMKTKNPDSQWPPRAATDREGFLAESSPQTQRAPYSGPQDLAALLEQIGCLKYLQVFEEQDVDLRIFLTLTESDLKEIGITLFGPKRKMTSAIARWHSSARPPGDALELAYADRLEAEMQELAIQLHKRCEEVEATRGQVCQEQELRAVVESCLLEQDRAREDLQARLRETWALARDAALVLDQLRACQAELSSRVRQDQPPGAATLGLAVPPADSKGWQASLQAMSLPELSGALEDRVREMGQALCLVTQSLEKLQVLNGKKWRET.

An interaction with NEK7 region spans residues 1–422 (MSELSDEASE…AESSPQTQRA (422 aa)). Ser-2 and Ser-5 each carry phosphoserine. 6 ANK repeats span residues 34 to 64 (DVPLDLHTAASIGQYEVVKECVQRRELDLNK), 68 to 97 (GGWTPLMYASYIGHDTIVHLLLEAGVSVNV), 101 to 130 (EGQTPLMLASSCGNESIAYFLLQQGAELEM), 134 to 163 (QGWTALFHCTSAGHQHMVRFLLDSGANANV), 168 to 197 (CGFTPLMEAAAAGHEIIVQYFLNHGVKVDA), and 201 to 220 (SGATARMLAKQYGHMKIVAL). At Asn-96 the chain carries 3-hydroxyasparagine. Residues Ser-201, Ser-225, Ser-243, Ser-244, and Ser-245 each carry the phosphoserine modification. 2 disordered regions span residues 235-265 (SPEKYEDLSSSDESCPAPQRQRPCRKKGVSI) and 277-312 (GIGLGGRAPRPRYEQAPPRGYVTFNSSGENPLEEEG). Position 319 is a phosphothreonine (Thr-319). Phosphoserine is present on residues Ser-320, Ser-368, Ser-371, and Ser-375. A disordered region spans residues 346–425 (GPVQSSSSSE…SPQTQRAPYS (80 aa)). Residues 425 to 488 (SGPQDLAALL…TSAIARWHSS (64 aa)) form the SAM domain. Residues 501-526 (ADRLEAEMQELAIQLHKRCEEVEATR) adopt a coiled-coil conformation. Ser-541 carries the post-translational modification Phosphoserine.

Homooligomer. Interacts (via SAM domain) with ANKS6 (via SAM domain). Interacts with BICC1. Interacts with NPHP1. Interacts with NEK8. Interacts with HIF1AN. Interacts with NEK7; this interaction alters the subcellular distribution of NEK7 by preventing its nuclear translocation. Hydroxylated at Asn-96, most probably by HIF1AN. In terms of processing, phosphorylations at Ser-5, Ser-225, Thr-319, Ser-320, Ser-368 and Ser-371 occur in a NEK7-dependent manner. Post-translationally, polyubiquitinated.

It localises to the cell projection. The protein resides in the cilium. Its subcellular location is the cytoplasm. Functionally, may be involved in vasopressin signaling in the kidney. The sequence is that of Ankyrin repeat and SAM domain-containing protein 3 (ANKS3) from Homo sapiens (Human).